The chain runs to 278 residues: Nucleotide-binding protein Tbd_0529 (278 aa).

ATP is bound at residue 8 to 15 (GLSGSGKS). 57–60 (DARS) serves as a coordination point for GTP.

This sequence belongs to the RapZ-like family.

In terms of biological role, displays ATPase and GTPase activities. The chain is Nucleotide-binding protein Tbd_0529 from Thiobacillus denitrificans (strain ATCC 25259 / T1).